The sequence spans 880 residues: Endoglucanase E-4 (880 aa).

The N-terminal stretch at 1 to 46 is a signal peptide; the sequence is MSVTEPPPRRRGRHSRARRFLTSLGATAALTAGMLGVPLATGTAHA. Residue Asp-104 is the Nucleophile of the active site. Active-site residues include His-422, His-427, Asp-461, and Glu-470. Residues 504 to 652 enclose the CBM3 domain; sequence PDGPEIFVEA…GVPVWGTAPE (149 aa). The tract at residues 647–688 is disordered; it reads WGTAPEEGEEPGGGEGPGGGEEPGEDVTPPSAPGSPAVRDVT. One can recognise a Fibronectin type-III domain in the interval 678 to 770; that stretch reads APGSPAVRDV…TVSFTTLAEN (93 aa). One can recognise a CBM2 domain in the interval 771–880; the sequence is GGGPDASCTV…TLNGEPCALA (110 aa).

This sequence belongs to the glycosyl hydrolase 9 (cellulase E) family.

It carries out the reaction Endohydrolysis of (1-&gt;4)-beta-D-glucosidic linkages in cellulose, lichenin and cereal beta-D-glucans.. Its pathway is glycan metabolism; cellulose degradation. This Thermobifida fusca (Thermomonospora fusca) protein is Endoglucanase E-4 (celD).